Reading from the N-terminus, the 185-residue chain is Putative lipoprotein LprB (185 aa).

The first 24 residues, 1 to 24, serve as a signal peptide directing secretion; the sequence is MRRKVRRLTLAVSALVALFPAVAG. A lipid anchor (N-palmitoyl cysteine) is attached at cysteine 25. Cysteine 25 is lipidated: S-diacylglycerol cysteine. The tract at residues 26–50 is disordered; the sequence is SDSGDNKPGATIPSTPANAEGRHGP.

It is found in the cell membrane. This Mycobacterium tuberculosis (strain CDC 1551 / Oshkosh) protein is Putative lipoprotein LprB (lprB).